The sequence spans 124 residues: Probable dihydroneopterin aldolase (124 aa).

Substrate-binding positions include Glu23, Tyr56, and 75–76 (IE). Lys103 (proton donor/acceptor) is an active-site residue.

This sequence belongs to the DHNA family.

It carries out the reaction 7,8-dihydroneopterin = 6-hydroxymethyl-7,8-dihydropterin + glycolaldehyde. Its pathway is cofactor biosynthesis; tetrahydrofolate biosynthesis; 2-amino-4-hydroxy-6-hydroxymethyl-7,8-dihydropteridine diphosphate from 7,8-dihydroneopterin triphosphate: step 3/4. Catalyzes the conversion of 7,8-dihydroneopterin to 6-hydroxymethyl-7,8-dihydropterin. This chain is Probable dihydroneopterin aldolase (folB), found in Chlamydia trachomatis serovar D (strain ATCC VR-885 / DSM 19411 / UW-3/Cx).